The sequence spans 295 residues: Probable cell division protein WhiA (295 aa).

The H-T-H motif DNA-binding region spans 262 to 293 (SLRELGKKLNLTKSQIYSKLKRIIKIAERFGD).

This sequence belongs to the WhiA family.

Involved in cell division and chromosome segregation. This chain is Probable cell division protein WhiA, found in Thermotoga maritima (strain ATCC 43589 / DSM 3109 / JCM 10099 / NBRC 100826 / MSB8).